Consider the following 126-residue polypeptide: Holo-[acyl-carrier-protein] synthase (126 aa).

Asp9 and Glu58 together coordinate Mg(2+).

Belongs to the P-Pant transferase superfamily. AcpS family. Mg(2+) is required as a cofactor.

The protein resides in the cytoplasm. It catalyses the reaction apo-[ACP] + CoA = holo-[ACP] + adenosine 3',5'-bisphosphate + H(+). In terms of biological role, transfers the 4'-phosphopantetheine moiety from coenzyme A to a Ser of acyl-carrier-protein. This Photobacterium profundum (strain SS9) protein is Holo-[acyl-carrier-protein] synthase.